We begin with the raw amino-acid sequence, 330 residues long: MRKIAIDAMGGENAPEAIVEAVLKAKPELPEDKFIFFGDEGKMKELLPADDDQIEIVATTEVILDEDEPVKAMRTKKDSSMVVAANWVKEGKADALLSLGNTGALLTCGIFIVGRIKGVARPGLMPTMPVESSDDGFNIIDVGANATSKPEYLLQWAEMASCYAEKVRGVSKPRVALLNNGAEFDKGDDLHKEVYQLLQDSSLNFTGNIEGHELLQGKADVVVTDGFTGNAVLKSIEGTGSVIIHMLKDGLLNNGVKAKLGALLAKDALKSVASRFDKDKYGGAVLLGLNSPVVKQHGRSDARAVYYAVKQIDKILTEDLTNTFKQEFSK.

This sequence belongs to the PlsX family. In terms of assembly, homodimer. Probably interacts with PlsY.

The protein localises to the cytoplasm. The catalysed reaction is a fatty acyl-[ACP] + phosphate = an acyl phosphate + holo-[ACP]. It participates in lipid metabolism; phospholipid metabolism. Its function is as follows. Catalyzes the reversible formation of acyl-phosphate (acyl-PO(4)) from acyl-[acyl-carrier-protein] (acyl-ACP). This enzyme utilizes acyl-ACP as fatty acyl donor, but not acyl-CoA. The chain is Phosphate acyltransferase from Lactobacillus delbrueckii subsp. bulgaricus (strain ATCC BAA-365 / Lb-18).